The primary structure comprises 1140 residues: Protein FAM184A (1140 aa).

Coiled coils occupy residues 57–256 (ALNT…NKAQ), 296–800 (AILR…IEME), and 868–907 (RITDLQEELRHREHHISELDKEVQHLHENISALTKELEFK). Positions 1063–1128 (PNLSALESGG…EASPVASPDP (66 aa)) are disordered.

Belongs to the FAM184 family.

It is found in the cytoplasm. The protein resides in the P-body. It localises to the cytoskeleton. Its subcellular location is the microtubule organizing center. The protein localises to the centrosome. It is found in the centriolar satellite. The polypeptide is Protein FAM184A (Homo sapiens (Human)).